Here is a 529-residue protein sequence, read N- to C-terminus: Peptide chain release factor 3 (529 aa).

A tr-type G domain is found at 10 to 279 (EQRRCFGIIS…ALVEMAPAPG (270 aa)). Residues 19-26 (SHPDAGKT), 87-91 (DTPGH), and 141-144 (NKMD) contribute to the GTP site.

Belongs to the TRAFAC class translation factor GTPase superfamily. Classic translation factor GTPase family. PrfC subfamily.

The protein localises to the cytoplasm. Its function is as follows. Increases the formation of ribosomal termination complexes and stimulates activities of RF-1 and RF-2. It binds guanine nucleotides and has strong preference for UGA stop codons. It may interact directly with the ribosome. The stimulation of RF-1 and RF-2 is significantly reduced by GTP and GDP, but not by GMP. In Desulfatibacillum aliphaticivorans, this protein is Peptide chain release factor 3.